Here is a 64-residue protein sequence, read N- to C-terminus: Mitotic-spindle organizing protein 1 (64 aa).

It belongs to the MOZART1 family. Part of the gamma-tubulin complex. Interacts directly with alp6/GPC3.

Its subcellular location is the cytoplasm. It localises to the cytoskeleton. It is found in the microtubule organizing center. The protein resides in the spindle pole body. Required for gamma-tubulin complex recruitment to the microtubule organizing center (MTOC). This is Mitotic-spindle organizing protein 1 (mzt1) from Schizosaccharomyces pombe (strain 972 / ATCC 24843) (Fission yeast).